We begin with the raw amino-acid sequence, 131 residues long: Proline-rich protein 3 (131 aa).

The interval 1-77 (LHRGPPGSRG…KEQRNPRRLK (77 aa)) is disordered. Pro residues predominate over residues 12 to 25 (MIPPLLSLPPPPRG). Positions 28 to 44 (PLRGGLGPRSGPYGRGW) are enriched in gly residues. A C3H1-type zinc finger spans residues 98–126 (KSDRPVCRHFAKKGHCRYEDLCAFYHPGA).

The chain is Proline-rich protein 3 (PRR3) from Sus scrofa (Pig).